A 342-amino-acid polypeptide reads, in one-letter code: Protein BMEI1586 (342 aa).

The active-site Proton acceptor is S90. Substrate is bound by residues 91-92 (GS), D251, and 256-257 (GT).

The protein belongs to the proline racemase family. In terms of assembly, homotetramer.

The enzyme catalyses trans-4-hydroxy-L-proline = cis-4-hydroxy-D-proline. Functionally, in vitro, catalyzes the epimerization of trans-4-hydroxy-L-proline (t4LHyp) to cis-4-hydroxy-D-proline (c4DHyp) and that of trans-3-hydroxy-L-proline (t3LHyp) to cis-3-hydroxy-D-proline (c3DHyp), albeit with very low efficiency. The physiological substrate may be different. Displays neither proline racemase activity nor t3LHyp dehydratase activity. The chain is Protein BMEI1586 from Brucella melitensis biotype 1 (strain ATCC 23456 / CCUG 17765 / NCTC 10094 / 16M).